Reading from the N-terminus, the 65-residue chain is Dybowskin-2CDYa (65 aa).

The N-terminal stretch at 1–22 (MFTLKKSLLLLFFIGVIKLSLC) is a signal peptide. Residues 23 to 47 (EEERNADDDERRDDPDEMDVEVENR) constitute a propeptide that is removed on maturation. The segment covering 26–43 (RNADDDERRDDPDEMDVE) has biased composition (acidic residues). The interval 26–65 (RNADDDERRDDPDEMDVEVENRSAVGRHGRRFGLRKHRKH) is disordered. Residues 50-65 (VGRHGRRFGLRKHRKH) are compositionally biased toward basic residues.

This sequence belongs to the frog skin active peptide (FSAP) family. Brevinin subfamily. Expressed by the skin glands.

The protein resides in the secreted. In terms of biological role, antimicrobial peptide. Has activity against the Gram-positive bacterium S.aureus (MIC=6 uM) and the Gram-negative bacterium E.coli (MIC=3 uM). Lacks hemolytic activity against human erythrocytes. In Rana dybowskii (Dybovsky's frog), this protein is Dybowskin-2CDYa.